The primary structure comprises 560 residues: Serine/threonine-protein kinase TOS3 (560 aa).

One can recognise a Protein kinase domain in the interval 50 to 344; sequence FEILATLGNG…LADIKVHPFM (295 aa). ATP contacts are provided by residues 56-64 and Lys-79; that span reads LGNGQYGKV. Asp-189 acts as the Proton acceptor in catalysis.

It belongs to the protein kinase superfamily. Ser/Thr protein kinase family. In terms of processing, autophosphorylated.

The catalysed reaction is L-seryl-[protein] + ATP = O-phospho-L-seryl-[protein] + ADP + H(+). It catalyses the reaction L-threonyl-[protein] + ATP = O-phospho-L-threonyl-[protein] + ADP + H(+). Its function is as follows. One of the three SNF1 protein kinases (with SAK1 and ELM1) which are required for growth on nonfermentable carbon sources and nonpreferred sugars and for response to environmental stress. Activates SNF1 by phosphorylation of its activation-loop 'Thr-210'. Required for the regulation by SNF1 of the transcription of a large set of genes, the modification the activity of metabolic enzymes, and the control of various nutrient-responsive cellular developmental processes. Also phosphorylates GAL83, MIG1 and SIP2. This is Serine/threonine-protein kinase TOS3 (TOS3) from Saccharomyces cerevisiae (strain YJM789) (Baker's yeast).